A 173-amino-acid polypeptide reads, in one-letter code: dCTP deaminase, dUMP-forming (173 aa).

Residues 93–98 (RSSIGR), Asp111, 119–121 (TLE), and Gln138 contribute to the dCTP site. The active-site Proton donor/acceptor is the Glu121.

This sequence belongs to the dCTP deaminase family. In terms of assembly, homotrimer.

It carries out the reaction dCTP + 2 H2O = dUMP + NH4(+) + diphosphate. Its pathway is pyrimidine metabolism; dUMP biosynthesis; dUMP from dCTP: step 1/1. Its function is as follows. Bifunctional enzyme that catalyzes both the deamination of dCTP to dUTP and the hydrolysis of dUTP to dUMP without releasing the toxic dUTP intermediate. This is dCTP deaminase, dUMP-forming from Leptospira interrogans serogroup Icterohaemorrhagiae serovar copenhageni (strain Fiocruz L1-130).